A 718-amino-acid polypeptide reads, in one-letter code: SANT and BTB domain regulator of class switch recombination (718 aa).

In terms of domain architecture, SANT spans 21-59; it reads DMILYPLIGIPQTINWETVARLVPGLTPKECVKRFDELK. A BTB domain is found at 147–255; it reads MVIHVCDEAK…QCIQYCHKNM (109 aa). Residues 555-576 are compositionally biased toward acidic residues; that stretch reads SEEEEYTTGSEVTEDEVGDEEE. Disordered stretches follow at residues 555–622 and 690–718; these read SEEE…SPFV and RASVPVTARQNSSDKNQRSKSRFGQGRPA. Positions 580–595 are enriched in basic residues; that stretch reads KQRKKEKPKKFTKPPK. The span at 604 to 615 shows a compositional bias: basic and acidic residues; sequence QKKEKTLEKSTS.

This sequence belongs to the KIAA1841 family. Homodimer. Interacts (via the BTB domain) with HDAC1 and NCOR2.

In terms of biological role, negatively regulates class switch recombination or isotype switching in splenic B-cells. The polypeptide is SANT and BTB domain regulator of class switch recombination (Mus musculus (Mouse)).